The chain runs to 280 residues: Phosphatidylinositol N-acetylglucosaminyltransferase GPI2 subunit (280 aa).

Residues 1–53 (MTRSPWKRLLWLKQEYPDNYTDPSFIELRARQKAESNQKSDRKLSEAARAQIR) lie on the Cytoplasmic side of the membrane. A helical membrane pass occupies residues 54-74 (LDFISFYQTILNTSFIYITFT). A topological domain (extracellular) is located at residue Y75. The helical transmembrane segment at 76–96 (IYYYGFDPIPPTIFLSFITLI) threads the bilayer. Topologically, residues 97–108 (ISRTKVDPLLSS) are cytoplasmic. A helical membrane pass occupies residues 109 to 129 (FMDVKSSLIITFAMLTLSPVL). Topologically, residues 130–135 (KSLSKT) are extracellular. The helical transmembrane segment at 136 to 156 (TASDSIWTLSFWLTLWYIFVI) threads the bilayer. At 157-189 (SSTKSKDKPSNLSTNILVALVAVLSSRLSTTID) the chain is on the cytoplasmic side. A helical transmembrane segment spans residues 190 to 210 (VFCFLLICIQLNIILPTYLSV). The Extracellular portion of the chain corresponds to 211-220 (TNKVVPIISN). A helical membrane pass occupies residues 221–241 (IIVYSFLNVALGWIYMLLIFF). The Cytoplasmic portion of the chain corresponds to 242–280 (ASVFYITVLPKWFIYWKINYHKRDNDLLSTWDARTPILD).

This sequence belongs to the PIGC family. As to quaternary structure, component of the phosphatidylinositol N-acetylglucosaminyltransferase (GPI-GlcNAc transferase) complex composed of at least GPI1, GPI2, GPI3, GPI15, GPI19 and ERI1. Interacts with ERI1.

Its subcellular location is the membrane. It carries out the reaction a 1,2-diacyl-sn-glycero-3-phospho-(1D-myo-inositol) + UDP-N-acetyl-alpha-D-glucosamine = a 6-(N-acetyl-alpha-D-glucosaminyl)-1-(1,2-diacyl-sn-glycero-3-phospho)-1D-myo-inositol + UDP + H(+). It participates in glycolipid biosynthesis; glycosylphosphatidylinositol-anchor biosynthesis. Functionally, part of the complex catalyzing the transfer of N-acetylglucosamine from UDP-N-acetylglucosamine to phosphatidylinositol, the first step of GPI biosynthesis. The protein is Phosphatidylinositol N-acetylglucosaminyltransferase GPI2 subunit (GPI2) of Saccharomyces cerevisiae (strain ATCC 204508 / S288c) (Baker's yeast).